The following is a 1077-amino-acid chain: Teashirt homolog 1-B (1077 aa).

Disordered regions lie at residues 1–110 and 142–179; these read MPRR…NASY and NEKASPTTNTDKSSKSEASGPTSDPGTPTTITSSSCTN. Residues 26–36 show a composition bias toward acidic residues; it reads TEEDNLEDDGL. Over residues 56 to 69 the composition is skewed to polar residues; that stretch reads TQSYQNSPISSATN. A compositionally biased stretch (low complexity) spans 160 to 179; sequence SGPTSDPGTPTTITSSSCTN. A C2H2-type 1 zinc finger spans residues 248 to 272; that stretch reads FRCKDCSAAYDTLVELTVHMNETGH. Basic and acidic residues predominate over residues 274-286; sequence RDDNRDREAERTK. The interval 274–300 is disordered; it reads RDDNRDREAERTKRWSKPRKRSLMEME. The segment at 309–333 adopts a C2H2-type 2 zinc-finger fold; the sequence is LKCMYCGHSFESLQDLSVHMIKTKH. Residues 362–394 are disordered; the sequence is ALPDSPEQAGISPGASVSESAKDPKAANPYVTP. The C2H2-type 3 zinc finger occupies 418–442; sequence LKCMECGSSHDTLQQLTAHMMVTGH. Disordered regions lie at residues 473–530 and 849–873; these read PPTT…KIEP and GRLTPKSSTPSTVSEKSDADGSSFE. Over residues 497-529 the composition is skewed to basic and acidic residues; it reads HSEEKKDPEKEKVNIGEVEKKIKEENEDPEKIE. A compositionally biased stretch (polar residues) spans 853 to 862; that stretch reads PKSSTPSTVS. The segment at residues 885–955 is a DNA-binding region (homeobox); that stretch reads RKGRQSNWNP…NVKYQLRRTG (71 aa). 2 C2H2-type zinc fingers span residues 970-992 and 1037-1060; these read FFCNDCASQFRTASTYIGHLETH and FQCKLCNRTFASKHAVKLHLSKTH.

Belongs to the teashirt C2H2-type zinc-finger protein family.

The protein localises to the nucleus. Probable transcriptional regulator involved in developmental processes. May act as a transcriptional repressor (Potential). Involved in two major neuronal regionalization processes: primary anteroposterior (AP) axis patterning of the CNS and segmentation of the cranial neuronal crest (CNS) development. In Xenopus laevis (African clawed frog), this protein is Teashirt homolog 1-B (tshz1-b).